The following is a 406-amino-acid chain: Argininosuccinate synthase (406 aa).

Residues 10-18 and Ala-37 each bind ATP; that span reads AYSGGLDTS. Residues Tyr-88 and Ser-93 each contribute to the L-citrulline site. Residue Gly-118 coordinates ATP. L-aspartate is bound by residues Thr-120, Asn-124, and Asp-125. Asn-124 is a binding site for L-citrulline. L-citrulline-binding residues include Arg-128, Ser-180, Ser-189, Glu-265, and Tyr-277.

The protein belongs to the argininosuccinate synthase family. Type 1 subfamily. In terms of assembly, homotetramer.

The protein localises to the cytoplasm. The catalysed reaction is L-citrulline + L-aspartate + ATP = 2-(N(omega)-L-arginino)succinate + AMP + diphosphate + H(+). Its pathway is amino-acid biosynthesis; L-arginine biosynthesis; L-arginine from L-ornithine and carbamoyl phosphate: step 2/3. The chain is Argininosuccinate synthase from Methylobacillus flagellatus (strain ATCC 51484 / DSM 6875 / VKM B-1610 / KT).